Here is a 406-residue protein sequence, read N- to C-terminus: Multifunctional CCA protein (406 aa).

2 residues coordinate ATP: Gly8 and Arg11. 2 residues coordinate CTP: Gly8 and Arg11. Asp21 and Asp23 together coordinate Mg(2+). ATP is bound by residues Arg91, Arg138, and Arg141. Arg91, Arg138, and Arg141 together coordinate CTP. The HD domain occupies 229–331; it reads TGIHQEMVSD…LELLGRCDAL (103 aa).

Belongs to the tRNA nucleotidyltransferase/poly(A) polymerase family. Bacterial CCA-adding enzyme type 1 subfamily. In terms of assembly, monomer. Can also form homodimers and oligomers. It depends on Mg(2+) as a cofactor. The cofactor is Ni(2+).

The catalysed reaction is a tRNA precursor + 2 CTP + ATP = a tRNA with a 3' CCA end + 3 diphosphate. The enzyme catalyses a tRNA with a 3' CCA end + 2 CTP + ATP = a tRNA with a 3' CCACCA end + 3 diphosphate. Functionally, catalyzes the addition and repair of the essential 3'-terminal CCA sequence in tRNAs without using a nucleic acid template. Adds these three nucleotides in the order of C, C, and A to the tRNA nucleotide-73, using CTP and ATP as substrates and producing inorganic pyrophosphate. tRNA 3'-terminal CCA addition is required both for tRNA processing and repair. Also involved in tRNA surveillance by mediating tandem CCA addition to generate a CCACCA at the 3' terminus of unstable tRNAs. While stable tRNAs receive only 3'-terminal CCA, unstable tRNAs are marked with CCACCA and rapidly degraded. In Stenotrophomonas maltophilia (strain R551-3), this protein is Multifunctional CCA protein.